Consider the following 299-residue polypeptide: 4-diphosphocytidyl-2-C-methyl-D-erythritol kinase (299 aa).

Residue Lys22 is part of the active site. 108–118 (PVGAGLGGGSS) serves as a coordination point for ATP. The active site involves Asp150.

This sequence belongs to the GHMP kinase family. IspE subfamily.

The enzyme catalyses 4-CDP-2-C-methyl-D-erythritol + ATP = 4-CDP-2-C-methyl-D-erythritol 2-phosphate + ADP + H(+). It functions in the pathway isoprenoid biosynthesis; isopentenyl diphosphate biosynthesis via DXP pathway; isopentenyl diphosphate from 1-deoxy-D-xylulose 5-phosphate: step 3/6. Functionally, catalyzes the phosphorylation of the position 2 hydroxy group of 4-diphosphocytidyl-2C-methyl-D-erythritol. The sequence is that of 4-diphosphocytidyl-2-C-methyl-D-erythritol kinase from Desulfotalea psychrophila (strain LSv54 / DSM 12343).